The chain runs to 546 residues: Mercuric reductase (546 aa).

The HMA domain occupies 2–66 (NKFKVNISGM…AIDEANYQAG (65 aa)). Residues Cys-13 and Cys-16 each coordinate a metal cation. Residues Ala-96, Gly-116, and Thr-121 each contribute to the FAD site. Cys-122 and Cys-127 are disulfide-bonded. Residues Lys-131 and Ala-195 each coordinate FAD. Residues 256–263 (GSGYIGME) and Gly-346 each bind NAD(+). The FAD site is built by Asp-387 and Val-395. Residues Cys-543 and Cys-544 each contribute to the Hg(2+) site.

The protein belongs to the class-I pyridine nucleotide-disulfide oxidoreductase family. In terms of assembly, homodimer. FAD serves as cofactor.

The catalysed reaction is Hg + NADP(+) + H(+) = Hg(2+) + NADPH. With respect to regulation, uses NADPH as the preferred electron donor, but shows slight activity with NADH as well. Inhibited by Cu(2+), Cd(2+), Zn(2+) and Co(2+), with Cu(2+) showing the strongest inhibition. Enzyme activity is enhanced by b-mercaptoethanol and NaCl up to concentrations of 500 uM and 100 mM respectively, followed by inhibition at higher concentrations. Its function is as follows. Resistance to Hg(2+) in bacteria appears to be governed by a specialized system which includes mercuric reductase. MerA protein is responsible for volatilizing mercury as Hg(0). Catalyzes reduction of Hg(2+) to elemental Hg, which is volatile and can diffuse out of cells passively. Plays a pivotal role in mercury resistance and cell protection. The protein is Mercuric reductase of Lysinibacillus sphaericus (Bacillus sphaericus).